A 499-amino-acid chain; its full sequence is Cytochrome P450 76T24 (499 aa).

Residues 3–23 (VDILLSLVLAFFGWAAIYFLT) form a helical membrane-spanning segment. N-linked (GlcNAc...) asparagine glycosylation is found at N55, N76, N279, and N284. C442 is a binding site for heme.

It belongs to the cytochrome P450 family.

The protein localises to the membrane. This Catharanthus roseus (Madagascar periwinkle) protein is Cytochrome P450 76T24.